The chain runs to 474 residues: Vitamin D-binding protein (474 aa).

An N-terminal signal peptide occupies residues 1-16 (MKRVLVLLLAVAFGHA). 3 consecutive Albumin domains span residues 17–208 (LERG…QLKH), 209–394 (LSLL…LLKK), and 395–474 (ELSS…KNIL). Intrachain disulfides connect Cys29–Cys75, Cys74–Cys83, Cys96–Cys112, Cys111–Cys122, Cys145–Cys190, Cys189–Cys198, Cys220–Cys266, Cys265–Cys273, Cys286–Cys300, Cys299–Cys311, Cys335–Cys376, Cys375–Cys384, Cys407–Cys453, and Cys452–Cys462.

It belongs to the ALB/AFP/VDB family. In terms of assembly, associates with membrane-bound immunoglobulin on the surface of B-lymphocytes and with IgG Fc receptor on the membranes of T-lymphocytes. Interacts with LRP2; the interaction is required for renal uptake of GC in complex with 25-hydroxyvitamin D3. Post-translationally, allele GC*1S is O-glycosylated at Thr-436. The trisaccharide sugar moiety can be modified by the successive removal of neuraminic acid and galactose leaving an O-mceeN-acetyl-galactosamine. This conversion is thought to produce a macrophage-activating factor (Gc-MAF). Only a minor proportion of plasma GC is O-glycosylated. The potential N-glycosylation site predicted at Asn-288 is thought to be nonglycosylated. Expressed in the liver. Found in plasma, ascites, cerebrospinal fluid and urine.

It is found in the secreted. In terms of biological role, involved in vitamin D transport and storage, scavenging of extracellular G-actin, enhancement of the chemotactic activity of C5 alpha for neutrophils in inflammation and macrophage activation. In Homo sapiens (Human), this protein is Vitamin D-binding protein (GC).